The sequence spans 128 residues: Large ribosomal subunit protein eL22 (128 aa).

It belongs to the eukaryotic ribosomal protein eL22 family. In terms of assembly, component of the large ribosomal subunit.

Its subcellular location is the cytoplasm. Component of the large ribosomal subunit. The ribosome is a large ribonucleoprotein complex responsible for the synthesis of proteins in the cell. The polypeptide is Large ribosomal subunit protein eL22 (rpl22) (Ictalurus punctatus (Channel catfish)).